A 546-amino-acid chain; its full sequence is Chaperonin GroEL (546 aa).

ATP contacts are provided by residues 29–32 (TLGP), K50, 86–90 (DGTTT), G414, 478–480 (NAA), and D494.

It belongs to the chaperonin (HSP60) family. As to quaternary structure, forms a cylinder of 14 subunits composed of two heptameric rings stacked back-to-back. Interacts with the co-chaperonin GroES.

It localises to the cytoplasm. The catalysed reaction is ATP + H2O + a folded polypeptide = ADP + phosphate + an unfolded polypeptide.. Functionally, together with its co-chaperonin GroES, plays an essential role in assisting protein folding. The GroEL-GroES system forms a nano-cage that allows encapsulation of the non-native substrate proteins and provides a physical environment optimized to promote and accelerate protein folding. The chain is Chaperonin GroEL from Psychrobacter arcticus (strain DSM 17307 / VKM B-2377 / 273-4).